The sequence spans 253 residues: Triosephosphate isomerase (253 aa).

Substrate is bound at residue 15–17; sequence NWK. Residue His101 is the Electrophile of the active site. The Proton acceptor role is filled by Glu171. Residues Gly177, Ser216, and 237 to 238 contribute to the substrate site; that span reads GG.

The protein belongs to the triosephosphate isomerase family. As to quaternary structure, homodimer.

Its subcellular location is the cytoplasm. The enzyme catalyses D-glyceraldehyde 3-phosphate = dihydroxyacetone phosphate. It participates in carbohydrate biosynthesis; gluconeogenesis. It functions in the pathway carbohydrate degradation; glycolysis; D-glyceraldehyde 3-phosphate from glycerone phosphate: step 1/1. Its function is as follows. Involved in the gluconeogenesis. Catalyzes stereospecifically the conversion of dihydroxyacetone phosphate (DHAP) to D-glyceraldehyde-3-phosphate (G3P). The protein is Triosephosphate isomerase of Caulobacter vibrioides (strain ATCC 19089 / CIP 103742 / CB 15) (Caulobacter crescentus).